The sequence spans 209 residues: Outer-membrane lipoprotein LolB (209 aa).

The first 17 residues, 1–17 (MATVFSRALGALVLGVA), serve as a signal peptide directing secretion. Residue Cys18 is the site of N-palmitoyl cysteine attachment. The S-diacylglycerol cysteine moiety is linked to residue Cys18.

It belongs to the LolB family. As to quaternary structure, monomer.

The protein localises to the cell outer membrane. In terms of biological role, plays a critical role in the incorporation of lipoproteins in the outer membrane after they are released by the LolA protein. This is Outer-membrane lipoprotein LolB from Ralstonia nicotianae (strain ATCC BAA-1114 / GMI1000) (Ralstonia solanacearum).